The chain runs to 241 residues: 2,3,4,5-tetrahydropyridine-2,6-dicarboxylate N-acetyltransferase (241 aa).

The protein belongs to the transferase hexapeptide repeat family. DapH subfamily.

It catalyses the reaction (S)-2,3,4,5-tetrahydrodipicolinate + acetyl-CoA + H2O = L-2-acetamido-6-oxoheptanedioate + CoA. It functions in the pathway amino-acid biosynthesis; L-lysine biosynthesis via DAP pathway; LL-2,6-diaminopimelate from (S)-tetrahydrodipicolinate (acetylase route): step 1/3. Its function is as follows. Catalyzes the transfer of an acetyl group from acetyl-CoA to tetrahydrodipicolinate. This is 2,3,4,5-tetrahydropyridine-2,6-dicarboxylate N-acetyltransferase from Thermoanaerobacter pseudethanolicus (strain ATCC 33223 / 39E) (Clostridium thermohydrosulfuricum).